Reading from the N-terminus, the 307-residue chain is tRNA dimethylallyltransferase (307 aa).

9–16 (GPTAIGKT) contributes to the ATP binding site. Residue 11–16 (TAIGKT) coordinates substrate. 2 interaction with substrate tRNA regions span residues 34–37 (DSRQ) and 164–168 (QRMMR).

This sequence belongs to the IPP transferase family. Monomer. Mg(2+) serves as cofactor.

It carries out the reaction adenosine(37) in tRNA + dimethylallyl diphosphate = N(6)-dimethylallyladenosine(37) in tRNA + diphosphate. In terms of biological role, catalyzes the transfer of a dimethylallyl group onto the adenine at position 37 in tRNAs that read codons beginning with uridine, leading to the formation of N6-(dimethylallyl)adenosine (i(6)A). The sequence is that of tRNA dimethylallyltransferase from Flavobacterium psychrophilum (strain ATCC 49511 / DSM 21280 / CIP 103535 / JIP02/86).